A 318-amino-acid polypeptide reads, in one-letter code: MEKPSSGANHVAKATVSLSIASVLILGAVLTMLSIQLDEAHERLQNRMGSFKFVARNIWHDIVLVKSNGRIKRQYGGYGSDSAQSDNQQCTSCVQLRCPPGPIGPPGVSGEPGMDGANGRPGKPGLDGLDVPLDPEPAFPCVICPAGPPGTRGPQGEVGRPGQTGESGHPGLPGRPGKPGRVGDAGPQGEPGEQGEPGIKGPPGDDSIGGTGIKGPPGPPGPRGPKGPPGSNGLPSQNSGPPGPIGEMGPPGPPGPRGEPGPPGPFGPPGDSGEPGGHCPSSCGVQEIVAPSVSELDTNDEPEKPARGGYSGGGYGKK.

Triple-helical region stretches follow at residues 101–130 (GPIG…DGLD), 147–206 (GPPG…PGDD), 209–235 (GGTG…NGLP), and 240–278 (GPPG…PGGH). Residues 101–318 (GPIGPPGVSG…GYSGGGYGKK (218 aa)) are disordered. A compositionally biased stretch (low complexity) spans 187–204 (PQGEPGEQGEPGIKGPPG). Pro residues-rich tracts occupy residues 216–228 (PPGP…PKGP) and 250–268 (PPGP…PFGP). Residues 309 to 318 (GYSGGGYGKK) are compositionally biased toward gly residues.

Belongs to the cuticular collagen family. Collagen polypeptide chains are complexed within the cuticle by disulfide bonds and other types of covalent cross-links.

In terms of biological role, nematode cuticles are composed largely of collagen-like proteins. The cuticle functions both as an exoskeleton and as a barrier to protect the worm from its environment. Mutations in dpy-7 affects the body shape. This Caenorhabditis elegans protein is Cuticle collagen dpy-7 (dpy-7).